A 431-amino-acid chain; its full sequence is Adenylosuccinate synthetase (431 aa).

GTP-binding positions include 13 to 19 (GDEGKGK) and 41 to 43 (GHT). The Proton acceptor role is filled by D14. Mg(2+) is bound by residues D14 and G41. IMP contacts are provided by residues 14–17 (DEGK), 39–42 (NAGH), T130, R144, Q225, T240, and R304. The active-site Proton donor is H42. 300–306 (ATTGRKR) serves as a coordination point for substrate. GTP contacts are provided by residues R306, 332 to 334 (KLD), and 415 to 417 (STG).

This sequence belongs to the adenylosuccinate synthetase family. Homodimer. Mg(2+) is required as a cofactor.

It localises to the cytoplasm. It catalyses the reaction IMP + L-aspartate + GTP = N(6)-(1,2-dicarboxyethyl)-AMP + GDP + phosphate + 2 H(+). Its pathway is purine metabolism; AMP biosynthesis via de novo pathway; AMP from IMP: step 1/2. Plays an important role in the de novo pathway of purine nucleotide biosynthesis. Catalyzes the first committed step in the biosynthesis of AMP from IMP. The sequence is that of Adenylosuccinate synthetase from Shewanella piezotolerans (strain WP3 / JCM 13877).